The following is a 91-amino-acid chain: Potassium channel toxin BuTXK-beta (91 aa).

Positions 1–20 (MQRNLVVLLLLGMVALSSCG) are cleaved as a signal peptide. The propeptide occupies 21 to 27 (LREKHFQ). Residues 54–91 (QFGCPAYQGYCDDHCQDIKKEEGFCHGMKCKCGIPMGF) enclose the BetaSPN-type CS-alpha/beta domain. Intrachain disulfides connect Cys-57–Cys-78, Cys-64–Cys-83, and Cys-68–Cys-85.

This sequence belongs to the long chain scorpion toxin family. Class 1 subfamily. Expressed by the venom gland.

Its subcellular location is the secreted. Functionally, inhibits voltage-gated potassium channel. This is Potassium channel toxin BuTXK-beta from Buthus israelis (Israeli scorpion).